A 726-amino-acid polypeptide reads, in one-letter code: E3 SUMO-protein ligase SIZ2 (726 aa).

Residues 43-77 (MEQLKVLELKQICKSLDLSITGKKAVLQDRIKQFL) form the SAP domain. The region spanning 139 to 291 (TALPPYSQQQ…SISCFIVEVF (153 aa)) is the PINIT domain. The SP-RING-type zinc finger occupies 323 to 408 (DDDDIITTST…IQNCNEDVEQ (86 aa)). Cys-354, His-356, Cys-377, and Cys-380 together coordinate Zn(2+). A disordered region spans residues 507–533 (PSESEGSSDYNPNHTSTPKGSPTMDQD). The span at 510–533 (SEGSSDYNPNHTSTPKGSPTMDQD) shows a compositional bias: polar residues.

The protein belongs to the PIAS family. In terms of assembly, interacts with CDC12. In terms of processing, autosumoylated upon ethanol stress.

It is found in the nucleus. The protein operates within protein modification; protein sumoylation. Functionally, may act as an E3 ligase mediating SUMO/Smt3 attachment to septins. May be involved in chromosome maintenance. The sequence is that of E3 SUMO-protein ligase SIZ2 (NFI1) from Saccharomyces cerevisiae (strain ATCC 204508 / S288c) (Baker's yeast).